A 178-amino-acid chain; its full sequence is MSRIGKQPVAIPSGVDVKIENGKIIAKKGNLTQEVEFGNRVNVSIEDNKIVFSPVGEDKQSKAFWGTYRALTNNAIEGLTKGFEKKLEINGVGYRAAVKGKELELQLGFSHPILYPIPEGIQISVEKNIITIKGHDKQKVGQVAAEIRSFRPPEPYKGKGVKYVDEVIIRKAGKTAKK.

It belongs to the universal ribosomal protein uL6 family. In terms of assembly, part of the 50S ribosomal subunit.

This protein binds to the 23S rRNA, and is important in its secondary structure. It is located near the subunit interface in the base of the L7/L12 stalk, and near the tRNA binding site of the peptidyltransferase center. The sequence is that of Large ribosomal subunit protein uL6 from Nitratiruptor sp. (strain SB155-2).